Here is a 96-residue protein sequence, read N- to C-terminus: ATP synthase subunit f, mitochondrial (96 aa).

It belongs to the ATPase F chain family.

The protein localises to the mitochondrion. Its subcellular location is the mitochondrion inner membrane. Mitochondrial membrane ATP synthase (F(1)F(0) ATP synthase or Complex V) produces ATP from ADP in the presence of a proton gradient across the membrane which is generated by electron transport complexes of the respiratory chain. F-type ATPases consist of two structural domains, F(1) - containing the extramembraneous catalytic core and F(0) - containing the membrane proton channel, linked together by a central stalk and a peripheral stalk. During catalysis, ATP synthesis in the catalytic domain of F(1) is coupled via a rotary mechanism of the central stalk subunits to proton translocation. In Schizosaccharomyces pombe (strain 972 / ATCC 24843) (Fission yeast), this protein is ATP synthase subunit f, mitochondrial (atp17).